We begin with the raw amino-acid sequence, 813 residues long: Receptor-like protein 48 (813 aa).

A signal peptide spans 1-30; the sequence is MHSCSERRMMTVIWSLCLIFCLSNSILAIA. Over 31 to 786 the chain is Extracellular; the sequence is KDLCLPDQRD…EDEEKEEKNQ (756 aa). 3 N-linked (GlcNAc...) asparagine glycosylation sites follow: N69, N105, and N123. 3 LRR repeats span residues 111–134, 136–159, and 160–182; these read LQHL…SIGN, KYLR…LGSL, and SYLT…SGGN. N-linked (GlcNAc...) asparagine glycans are attached at residues N195 and N216. LRR repeat units follow at residues 196-219, 220-244, 245-260, 261-285, 288-310, 311-335, 336-359, 361-381, 382-405, 406-432, 434-450, 451-473, 475-498, 500-521, 523-544, 545-571, 572-595, 642-666, 667-690, 691-714, and 716-739; these read LSSV…NMSS, LSKL…LFMI, PSLN…NISS, HSEL…LSKL, LRDL…IFLH, LKSL…FFSH, LMSL…SFPS, TGTL…LENQ, TSLF…LWRL, PTLS…IYSF, ASDN…VCEL, VSLN…CFEN, KTIS…IISE, LTSL…LIKC, DLEF…WLRS, LSNL…SLSF, PKLR…YFAG, FTIY…IGIL, KELI…LSNL, SNLQ…LGKL, and FLEW…QIQS. N-linked (GlcNAc...) asparagine glycans are attached at residues N248 and N257. N-linked (GlcNAc...) asparagine glycosylation is present at N380. An N-linked (GlcNAc...) asparagine glycan is attached at N484. Residues N673 and N689 are each glycosylated (N-linked (GlcNAc...) asparagine). Residues N721 and N741 are each glycosylated (N-linked (GlcNAc...) asparagine). A disordered region spans residues 756–785; sequence FLNKCGGEEEEEEEATKQEEDEDEEKEEKN. Residues 763–781 show a composition bias toward acidic residues; the sequence is EEEEEEEATKQEEDEDEEK. The chain crosses the membrane as a helical span at residues 787–807; it reads VFSWIAAAIGYVPGVFCGLTI. Over 808-813 the chain is Cytoplasmic; it reads AHILTS.

It belongs to the RLP family.

The protein resides in the cell membrane. Functionally, plays a role in root hair development. This is Receptor-like protein 48 from Arabidopsis thaliana (Mouse-ear cress).